A 103-amino-acid chain; its full sequence is NADH-quinone oxidoreductase subunit K (103 aa).

3 helical membrane passes run 7–27 (TEHGLYLAAALFILGLIGVLV), 31–51 (LIFMLLSLEIMLNATGLAFIV), and 65–85 (FMLILTLAAAEAAVALALILL).

Belongs to the complex I subunit 4L family. In terms of assembly, NDH-1 is composed of 14 different subunits. Subunits NuoA, H, J, K, L, M, N constitute the membrane sector of the complex.

Its subcellular location is the cell inner membrane. It carries out the reaction a quinone + NADH + 5 H(+)(in) = a quinol + NAD(+) + 4 H(+)(out). In terms of biological role, NDH-1 shuttles electrons from NADH, via FMN and iron-sulfur (Fe-S) centers, to quinones in the respiratory chain. The immediate electron acceptor for the enzyme in this species is believed to be ubiquinone. Couples the redox reaction to proton translocation (for every two electrons transferred, four hydrogen ions are translocated across the cytoplasmic membrane), and thus conserves the redox energy in a proton gradient. This chain is NADH-quinone oxidoreductase subunit K, found in Nitrosococcus oceani (strain ATCC 19707 / BCRC 17464 / JCM 30415 / NCIMB 11848 / C-107).